Consider the following 234-residue polypeptide: Cytidylate kinase (234 aa).

Residue 10–18 (GYSACGKST) participates in ATP binding.

Belongs to the cytidylate kinase family. Type 1 subfamily.

The protein localises to the cytoplasm. It carries out the reaction CMP + ATP = CDP + ADP. The catalysed reaction is dCMP + ATP = dCDP + ADP. In Cytophaga hutchinsonii (strain ATCC 33406 / DSM 1761 / CIP 103989 / NBRC 15051 / NCIMB 9469 / D465), this protein is Cytidylate kinase.